Consider the following 181-residue polypeptide: Prepronociceptin (181 aa).

An N-terminal signal peptide occupies residues 1–19 (MKILFCDVLLLSLLSSVFS). Residues 20–95 (SCPEDCLTCQ…QSKASEMQHL (76 aa)) constitute a propeptide that is removed on maturation. A disordered region spans residues 103–125 (SVVQARDAEPEADAEPVADEADE). 2 repeat units span residues 109–114 (DAEPEA) and 115–120 (DAEPVA). The interval 109–120 (DAEPEADAEPVA) is 2 X 6 AA tandem repeats of D-A-E-P-X-A. Acidic residues predominate over residues 112 to 125 (PEADAEPVADEADE). The propeptide occupies 174-181 (TLHQNGNV).

The protein belongs to the opioid neuropeptide precursor family. Post-translationally, specific enzymatic cleavages at paired basic residues probably yield other active peptides besides nociceptin. In terms of processing, the N-terminal domain contains 6 conserved cysteines thought to be involved in disulfide bonding and/or processing. In terms of tissue distribution, expressed predominantly in the spinal cord and brain, being more abundant in the hypothalamus and striatum. Also found in small amounts in ovary.

The protein resides in the secreted. Functionally, ligand of the opioid receptor-like receptor OPRL1. It may act as a transmitter in the brain by modulating nociceptive and locomotor behavior. May be involved in neuronal differentiation and development. Blocks nociceptin action in pain transmission by inhibiting nociceptin-induced hyperalgesia and allodynia. Its function is as follows. Has potent analgesic activity. This chain is Prepronociceptin (Pnoc), found in Rattus norvegicus (Rat).